We begin with the raw amino-acid sequence, 325 residues long: Phospholipid phosphatase-related protein type 1 (325 aa).

The N-linked (GlcNAc...) asparagine glycan is linked to Asn5. Helical transmembrane passes span 13–33 (IIPC…LLAY), 67–87 (FITP…IIFI), and 127–147 (FTGV…AGQV). The N-linked (GlcNAc...) asparagine glycan is linked to Asn163. A run of 3 helical transmembrane segments spans residues 201-218 (AALS…ITST), 230-247 (VLCL…LNRV), and 257-277 (VIAG…CVVH). Residue Ser307 is modified to Phosphoserine. Asn316 is a glycosylation site (N-linked (GlcNAc...) asparagine).

The protein belongs to the PA-phosphatase related phosphoesterase family.

It localises to the cell membrane. Its subcellular location is the cell projection. The protein localises to the neuron projection. In terms of biological role, may play a role in neurite outgrowth and neurogenesis. This chain is Phospholipid phosphatase-related protein type 1, found in Homo sapiens (Human).